Reading from the N-terminus, the 124-residue chain is Small ribosomal subunit protein uS12 (124 aa).

The tract at residues 1–27 (MPTINQLIRKPRKSQTEKTASPALQNC) is disordered. The span at 17-27 (EKTASPALQNC) shows a compositional bias: polar residues. Residue D89 is modified to 3-methylthioaspartic acid.

Belongs to the universal ribosomal protein uS12 family. In terms of assembly, part of the 30S ribosomal subunit. Contacts proteins S8 and S17. May interact with IF1 in the 30S initiation complex.

In terms of biological role, with S4 and S5 plays an important role in translational accuracy. Interacts with and stabilizes bases of the 16S rRNA that are involved in tRNA selection in the A site and with the mRNA backbone. Located at the interface of the 30S and 50S subunits, it traverses the body of the 30S subunit contacting proteins on the other side and probably holding the rRNA structure together. The combined cluster of proteins S8, S12 and S17 appears to hold together the shoulder and platform of the 30S subunit. The polypeptide is Small ribosomal subunit protein uS12 (Borreliella afzelii (strain PKo) (Borrelia afzelii)).